The following is a 193-amino-acid chain: uncharacterized protein (193 aa).

This is an uncharacterized protein from Mycoplasma pneumoniae (strain ATCC 29342 / M129 / Subtype 1) (Mycoplasmoides pneumoniae).